The chain runs to 143 residues: Large ribosomal subunit protein uL11 (143 aa).

The protein belongs to the universal ribosomal protein uL11 family. Part of the ribosomal stalk of the 50S ribosomal subunit. Interacts with L10 and the large rRNA to form the base of the stalk. L10 forms an elongated spine to which L12 dimers bind in a sequential fashion forming a multimeric L10(L12)X complex. Post-translationally, one or more lysine residues are methylated.

Forms part of the ribosomal stalk which helps the ribosome interact with GTP-bound translation factors. The polypeptide is Large ribosomal subunit protein uL11 (Bifidobacterium longum subsp. infantis (strain ATCC 15697 / DSM 20088 / JCM 1222 / NCTC 11817 / S12)).